The chain runs to 968 residues: RNA polymerase-associated protein RapA (968 aa).

Residues 164–334 (DVGRRHAPRV…FARLRLLDPN (171 aa)) enclose the Helicase ATP-binding domain. Position 177 to 184 (177 to 184 (DEVGLGKT)) interacts with ATP. The DEAH box motif lies at 280–283 (DEAH). In terms of domain architecture, Helicase C-terminal spans 490–662 (RVEWLMGYLT…YLASPDQTEG (173 aa)).

This sequence belongs to the SNF2/RAD54 helicase family. RapA subfamily. Interacts with the RNAP. Has a higher affinity for the core RNAP than for the holoenzyme. Its ATPase activity is stimulated by binding to RNAP.

Transcription regulator that activates transcription by stimulating RNA polymerase (RNAP) recycling in case of stress conditions such as supercoiled DNA or high salt concentrations. Probably acts by releasing the RNAP, when it is trapped or immobilized on tightly supercoiled DNA. Does not activate transcription on linear DNA. Probably not involved in DNA repair. The polypeptide is RNA polymerase-associated protein RapA (Shigella dysenteriae serotype 1 (strain Sd197)).